The chain runs to 304 residues: Acetyl-coenzyme A carboxylase carboxyl transferase subunit beta (304 aa).

Residues 52–304 (EVTKCPSCGV…TIFKVLNDII (253 aa)) form the CoA carboxyltransferase N-terminal domain. Positions 56, 59, 75, and 78 each coordinate Zn(2+). The segment at 56–78 (CPSCGVLSHKSEIRANMKMCSNC) adopts a C4-type zinc-finger fold.

Belongs to the AccD/PCCB family. Acetyl-CoA carboxylase is a heterohexamer composed of biotin carboxyl carrier protein (AccB), biotin carboxylase (AccC) and two subunits each of ACCase subunit alpha (AccA) and ACCase subunit beta (AccD). Zn(2+) serves as cofactor.

Its subcellular location is the cytoplasm. It catalyses the reaction N(6)-carboxybiotinyl-L-lysyl-[protein] + acetyl-CoA = N(6)-biotinyl-L-lysyl-[protein] + malonyl-CoA. It participates in lipid metabolism; malonyl-CoA biosynthesis; malonyl-CoA from acetyl-CoA: step 1/1. In terms of biological role, component of the acetyl coenzyme A carboxylase (ACC) complex. Biotin carboxylase (BC) catalyzes the carboxylation of biotin on its carrier protein (BCCP) and then the CO(2) group is transferred by the transcarboxylase to acetyl-CoA to form malonyl-CoA. In Fusobacterium nucleatum subsp. nucleatum (strain ATCC 25586 / DSM 15643 / BCRC 10681 / CIP 101130 / JCM 8532 / KCTC 2640 / LMG 13131 / VPI 4355), this protein is Acetyl-coenzyme A carboxylase carboxyl transferase subunit beta.